A 261-amino-acid chain; its full sequence is Cytochrome c oxidase subunit 3 (261 aa).

Over 1-15 the chain is Mitochondrial matrix; the sequence is MTHQLHAYHMVKPSP. The chain crosses the membrane as a helical span at residues 16–34; sequence WPLTGALSAFLLTSGLIMW. Residues 35-40 are Mitochondrial intermembrane-facing; sequence FHFYST. Residues 41–66 form a helical membrane-spanning segment; it reads ALLTLGLLTNVLTMYQWWRDIIREST. The Mitochondrial matrix portion of the chain corresponds to 67–72; it reads YQGHHT. The helical transmembrane segment at 73-105 threads the bilayer; the sequence is TPVQKSLRYGMTLFIISEVFFFAGFFWAFYHSS. Residues 106-128 lie on the Mitochondrial intermembrane side of the membrane; sequence LAPTPRLGCHWPPTGITPLNPLE. Residues 129–152 traverse the membrane as a helical segment; sequence VPLLNTSVLLASGVTITWAHHSLM. At 153–155 the chain is on the mitochondrial matrix side; sequence NGN. The chain crosses the membrane as a helical span at residues 156 to 183; the sequence is RKQTIQALLITILLGTYFTLVQISEYFE. Residues 184-190 lie on the Mitochondrial intermembrane side of the membrane; the sequence is APFTISD. The helical transmembrane segment at 191-223 threads the bilayer; the sequence is GIYGSTFFVATGFHGLHVIIGSTFLLICLIRQL. Residues 224 to 232 are Mitochondrial matrix-facing; it reads FYHFTPSHH. Residues 233–256 form a helical membrane-spanning segment; the sequence is FGFEAAAWYWHFVDVIWLFLYISI. Residues 257 to 261 lie on the Mitochondrial intermembrane side of the membrane; sequence YWWGS.

The protein belongs to the cytochrome c oxidase subunit 3 family. As to quaternary structure, component of the cytochrome c oxidase (complex IV, CIV), a multisubunit enzyme composed of 14 subunits. The complex is composed of a catalytic core of 3 subunits MT-CO1, MT-CO2 and MT-CO3, encoded in the mitochondrial DNA, and 11 supernumerary subunits COX4I, COX5A, COX5B, COX6A, COX6B, COX6C, COX7A, COX7B, COX7C, COX8 and NDUFA4, which are encoded in the nuclear genome. The complex exists as a monomer or a dimer and forms supercomplexes (SCs) in the inner mitochondrial membrane with NADH-ubiquinone oxidoreductase (complex I, CI) and ubiquinol-cytochrome c oxidoreductase (cytochrome b-c1 complex, complex III, CIII), resulting in different assemblies (supercomplex SCI(1)III(2)IV(1) and megacomplex MCI(2)III(2)IV(2)).

The protein localises to the mitochondrion inner membrane. The catalysed reaction is 4 Fe(II)-[cytochrome c] + O2 + 8 H(+)(in) = 4 Fe(III)-[cytochrome c] + 2 H2O + 4 H(+)(out). Its function is as follows. Component of the cytochrome c oxidase, the last enzyme in the mitochondrial electron transport chain which drives oxidative phosphorylation. The respiratory chain contains 3 multisubunit complexes succinate dehydrogenase (complex II, CII), ubiquinol-cytochrome c oxidoreductase (cytochrome b-c1 complex, complex III, CIII) and cytochrome c oxidase (complex IV, CIV), that cooperate to transfer electrons derived from NADH and succinate to molecular oxygen, creating an electrochemical gradient over the inner membrane that drives transmembrane transport and the ATP synthase. Cytochrome c oxidase is the component of the respiratory chain that catalyzes the reduction of oxygen to water. Electrons originating from reduced cytochrome c in the intermembrane space (IMS) are transferred via the dinuclear copper A center (CU(A)) of subunit 2 and heme A of subunit 1 to the active site in subunit 1, a binuclear center (BNC) formed by heme A3 and copper B (CU(B)). The BNC reduces molecular oxygen to 2 water molecules using 4 electrons from cytochrome c in the IMS and 4 protons from the mitochondrial matrix. The chain is Cytochrome c oxidase subunit 3 (MT-CO3) from Papio hamadryas (Hamadryas baboon).